The following is a 242-amino-acid chain: ATP-dependent dethiobiotin synthetase BioD (242 aa).

An ATP-binding site is contributed by 12-17 (EVGKTV). Thr16 provides a ligand contact to Mg(2+). The active site involves Lys37. Ser41 is a substrate binding site. ATP contacts are provided by residues Asp51 and 112–115 (EGAG). The Mg(2+) site is built by Asp51 and Glu112.

It belongs to the dethiobiotin synthetase family. Homodimer. The cofactor is Mg(2+).

The protein localises to the cytoplasm. It catalyses the reaction (7R,8S)-7,8-diammoniononanoate + CO2 + ATP = (4R,5S)-dethiobiotin + ADP + phosphate + 3 H(+). It functions in the pathway cofactor biosynthesis; biotin biosynthesis; biotin from 7,8-diaminononanoate: step 1/2. In terms of biological role, catalyzes a mechanistically unusual reaction, the ATP-dependent insertion of CO2 between the N7 and N8 nitrogen atoms of 7,8-diaminopelargonic acid (DAPA, also called 7,8-diammoniononanoate) to form a ureido ring. The chain is ATP-dependent dethiobiotin synthetase BioD from Bacillus cereus (strain ATCC 14579 / DSM 31 / CCUG 7414 / JCM 2152 / NBRC 15305 / NCIMB 9373 / NCTC 2599 / NRRL B-3711).